Consider the following 659-residue polypeptide: tRNA (guanine(26)-N(2))-dimethyltransferase (659 aa).

Residues 1 to 23 (MQGSSLWLSLTFRSARVLSRARF) constitute a mitochondrion transit peptide. Residues 55–499 (TTVTEGAAKI…APASALWDIM (445 aa)) form the Trm1 methyltransferase domain. Arg82 serves as a coordination point for S-adenosyl-L-methionine. Ser120 carries the phosphoserine modification. Arg166 and Asp184 together coordinate S-adenosyl-L-methionine. Positions 348, 351, 384, and 387 each coordinate Zn(2+). Ser517 bears the Phosphoserine mark. Disordered stretches follow at residues 537-578 (EDAN…AMEE) and 616-659 (RGDQ…PGID). The Nuclear localization signal signature appears at 543–575 (SRQRGLKRFQANPEANWGPRPRARPGGKAADEA). A C3H1-type zinc finger spans residues 600-627 (RLKTFPCKRFKEGTCQRGDQCCYSHSPP). Ser625 is modified (phosphoserine). Residues Thr628 and Thr646 each carry the phosphothreonine modification.

This sequence belongs to the class I-like SAM-binding methyltransferase superfamily. Trm1 family. In terms of processing, (Microbial infection) Cleaved between Gln-530 and Ala-531 by the 3C-like proteinase nsp5 from human coronavirus SARS-CoV-2, leading to its inactivation.

The protein resides in the mitochondrion. Its subcellular location is the nucleus. It is found in the cytoplasm. The enzyme catalyses guanosine(26) in tRNA + 2 S-adenosyl-L-methionine = N(2)-dimethylguanosine(26) in tRNA + 2 S-adenosyl-L-homocysteine + 2 H(+). Its function is as follows. Dimethylates a single guanine residue at position 26 of most nuclear- and mitochondrial-encoded tRNAs using S-adenosyl-L-methionine as donor of the methyl groups. tRNA guanine(26)-dimethylation is required for redox homeostasis and ensure proper cellular proliferation and oxidative stress survival. In Homo sapiens (Human), this protein is tRNA (guanine(26)-N(2))-dimethyltransferase.